A 790-amino-acid polypeptide reads, in one-letter code: Lon protease 2 (790 aa).

A Lon N-terminal domain is found at 18-210; that stretch reads LRILPLRNMV…HVTFYMTRQL (193 aa). 362 to 369 is an ATP binding site; that stretch reads GPPGVGKT. Residues 598 to 779 form the Lon proteolytic domain; that stretch reads SWGCGIATGL…SDVLQLALLP (182 aa). Catalysis depends on residues Ser-685 and Lys-728.

Belongs to the peptidase S16 family. As to quaternary structure, homohexamer. Organized in a ring with a central cavity.

The protein resides in the cytoplasm. It catalyses the reaction Hydrolysis of proteins in presence of ATP.. In terms of biological role, ATP-dependent serine protease that mediates the selective degradation of mutant and abnormal proteins as well as certain short-lived regulatory proteins. Required for cellular homeostasis and for survival from DNA damage and developmental changes induced by stress. Degrades polypeptides processively to yield small peptide fragments that are 5 to 10 amino acids long. Binds to DNA in a double-stranded, site-specific manner. This chain is Lon protease 2, found in Syntrophobacter fumaroxidans (strain DSM 10017 / MPOB).